A 137-amino-acid polypeptide reads, in one-letter code: Putative pre-16S rRNA nuclease (137 aa).

Belongs to the YqgF nuclease family.

The protein localises to the cytoplasm. In terms of biological role, could be a nuclease involved in processing of the 5'-end of pre-16S rRNA. The chain is Putative pre-16S rRNA nuclease from Flavobacterium psychrophilum (strain ATCC 49511 / DSM 21280 / CIP 103535 / JIP02/86).